Consider the following 240-residue polypeptide: MATLFIADLHLQTEEPAIVAGFLRFLAVEARQADALYILGDLFEAWIGDDDPNPLHREMAVAIKSLVDSGVPCFFIHGNRDFLIGKRFARESGMILLPQEKVLDLYGRNVLIMHGDTLCTDDAGYQAFRAKVHNPWVQRLFLTLPLFIRRRIAARMRAGSKAANSSKSLDIMDVNAQTVVAEMEKHRVQWLVHGHTHRPAVHELSVNDQPAFRVVLGAWHHEGSMVKVTPDNVELIAFPL.

Positions 8, 10, 41, 79, and 114 each coordinate Mn(2+). A substrate-binding site is contributed by 79 to 80 (NR). The substrate site is built by Asp122, Ser160, Asn164, Lys167, and His195. Mn(2+) is bound by residues His195 and His197.

The protein belongs to the LpxH family. It depends on Mn(2+) as a cofactor.

It is found in the cell inner membrane. It catalyses the reaction UDP-2-N,3-O-bis[(3R)-3-hydroxytetradecanoyl]-alpha-D-glucosamine + H2O = 2-N,3-O-bis[(3R)-3-hydroxytetradecanoyl]-alpha-D-glucosaminyl 1-phosphate + UMP + 2 H(+). It participates in glycolipid biosynthesis; lipid IV(A) biosynthesis; lipid IV(A) from (3R)-3-hydroxytetradecanoyl-[acyl-carrier-protein] and UDP-N-acetyl-alpha-D-glucosamine: step 4/6. Its function is as follows. Hydrolyzes the pyrophosphate bond of UDP-2,3-diacylglucosamine to yield 2,3-diacylglucosamine 1-phosphate (lipid X) and UMP by catalyzing the attack of water at the alpha-P atom. Involved in the biosynthesis of lipid A, a phosphorylated glycolipid that anchors the lipopolysaccharide to the outer membrane of the cell. The polypeptide is UDP-2,3-diacylglucosamine hydrolase (Salmonella paratyphi C (strain RKS4594)).